The primary structure comprises 421 residues: UDP-N-acetylglucosamine 1-carboxyvinyltransferase (421 aa).

22–23 (KN) is a binding site for phosphoenolpyruvate. Arg-93 lines the UDP-N-acetyl-alpha-D-glucosamine pocket. Cys-117 (proton donor) is an active-site residue. Cys-117 is modified (2-(S-cysteinyl)pyruvic acid O-phosphothioketal). Residues 122–126 (RPVDL), Asp-308, and Val-330 contribute to the UDP-N-acetyl-alpha-D-glucosamine site.

This sequence belongs to the EPSP synthase family. MurA subfamily.

Its subcellular location is the cytoplasm. It carries out the reaction phosphoenolpyruvate + UDP-N-acetyl-alpha-D-glucosamine = UDP-N-acetyl-3-O-(1-carboxyvinyl)-alpha-D-glucosamine + phosphate. It functions in the pathway cell wall biogenesis; peptidoglycan biosynthesis. Functionally, cell wall formation. Adds enolpyruvyl to UDP-N-acetylglucosamine. The protein is UDP-N-acetylglucosamine 1-carboxyvinyltransferase of Ectopseudomonas mendocina (strain ymp) (Pseudomonas mendocina).